A 95-amino-acid polypeptide reads, in one-letter code: Sec-independent protein translocase protein TatA (95 aa).

A helical membrane pass occupies residues 1–21; sequence MGSMSVWHWVIVAVVVMLLFG. The segment at 42-95 is disordered; sequence GMADDETQPNTATSVPPVGPNDPVRTLPHQGAPGTAPQPPHVQPHVPAGDHKAV.

This sequence belongs to the TatA/E family. The Tat system comprises two distinct complexes: a TatABC complex, containing multiple copies of TatA, TatB and TatC subunits, and a separate TatA complex, containing only TatA subunits. Substrates initially bind to the TatABC complex, which probably triggers association of the separate TatA complex to form the active translocon.

The protein resides in the cell inner membrane. Its function is as follows. Part of the twin-arginine translocation (Tat) system that transports large folded proteins containing a characteristic twin-arginine motif in their signal peptide across membranes. TatA could form the protein-conducting channel of the Tat system. The polypeptide is Sec-independent protein translocase protein TatA (Methylorubrum extorquens (strain PA1) (Methylobacterium extorquens)).